We begin with the raw amino-acid sequence, 321 residues long: Phospho-N-acetylmuramoyl-pentapeptide-transferase (321 aa).

10 helical membrane-spanning segments follow: residues 6 to 26 (IFIP…LFIG), 54 to 74 (MGGV…GLFF), 77 to 97 (FTPS…LGYL), 117 to 137 (LIGQ…EGFS), 143 to 163 (FGVA…FWLV), 175 to 195 (IDGL…IIAW), 200 to 220 (FDVV…FPYN), 226 to 246 (IFMG…ISII), 251 to 271 (WTLL…ILQV), and 301 to 321 (IDFV…WILF).

It belongs to the glycosyltransferase 4 family. MraY subfamily. It depends on Mg(2+) as a cofactor.

It localises to the cell membrane. The enzyme catalyses UDP-N-acetyl-alpha-D-muramoyl-L-alanyl-gamma-D-glutamyl-L-lysyl-D-alanyl-D-alanine + di-trans,octa-cis-undecaprenyl phosphate = Mur2Ac(oyl-L-Ala-gamma-D-Glu-L-Lys-D-Ala-D-Ala)-di-trans,octa-cis-undecaprenyl diphosphate + UMP. The protein operates within cell wall biogenesis; peptidoglycan biosynthesis. Its function is as follows. Catalyzes the initial step of the lipid cycle reactions in the biosynthesis of the cell wall peptidoglycan: transfers peptidoglycan precursor phospho-MurNAc-pentapeptide from UDP-MurNAc-pentapeptide onto the lipid carrier undecaprenyl phosphate, yielding undecaprenyl-pyrophosphoryl-MurNAc-pentapeptide, known as lipid I. This Enterococcus faecalis (strain ATCC 700802 / V583) protein is Phospho-N-acetylmuramoyl-pentapeptide-transferase.